Here is a 219-residue protein sequence, read N- to C-terminus: Probable GTP-binding protein EngB (219 aa).

Positions 40–212 (LLPEIAFIGK…KASLAKCIIK (173 aa)) constitute an EngB-type G domain. GTP contacts are provided by residues 48–55 (GKSNVGKS), 75–79 (GRTGQ), 93–96 (DLPG), 160–163 (TKFD), and 191–193 (VSS). Mg(2+)-binding residues include S55 and T77.

This sequence belongs to the TRAFAC class TrmE-Era-EngA-EngB-Septin-like GTPase superfamily. EngB GTPase family. Mg(2+) is required as a cofactor.

Functionally, necessary for normal cell division and for the maintenance of normal septation. In Rickettsia canadensis (strain McKiel), this protein is Probable GTP-binding protein EngB.